Reading from the N-terminus, the 266-residue chain is MGLHSTADAAAIRASIRSGAFGGHTSGMAPGKLQCNLAILPAAHALDFLRFCQRNPKPCPVVGVSETGDPMLPTLGVDIDIRTDVPRYRIFRDGVLTGEVTDIRDLWTDDLVSVALGCSFTFENALVRAGIPVRHIEDGVNVPMFRTNIPLVPAGPFNGHMVVTMRPIPEAMVDKAHGISARFPQAHGAPIATGDPRALGIADLAKPDYGDAVAVKPGEVPVFWACGVTPQNVLRDARLPLCITHSPGHMLISDVAEDAETPIYQS.

It belongs to the D-glutamate cyclase family.

The protein is Putative hydro-lyase Jann_2570 of Jannaschia sp. (strain CCS1).